Here is a 415-residue protein sequence, read N- to C-terminus: MTDKLQPLRGMKDLLPDDYKVHDYIIKKAKEVGELYGYKQMSTPILEYTKVFNRSMGESSDVISKEIYSFLDKSDESVALRPEFTAGIVRAFISNGLQHKLPLKLFSTGPVFRYDRPQAGRQRQFHQLNYEYLGAKGAISDAETLKLAVDILQSLEVLADTTLELNSLGCSQSRSTYQQKLVEYLNDFKDELSEDSKIRLTKNPMRILDSKSEVDQKIVANAPVLSEYYTEESKKYFEELLKYLDILGVKYTINARLVRGLDYYCHTAFEFTTTKLGSQSTILAGGRYDGLSRIMGNNDEIPAIGFAAGIERIALMREYNIDSVTPIFVLPIGENNISHSLKIADQLRLHNIPVLIEVSGKMAKRMQRALNENAKFIVFIGDEEQANNNLKIKDLEKQEEYILDFSKTIELLKKS.

It belongs to the class-II aminoacyl-tRNA synthetase family. Homodimer.

The protein resides in the cytoplasm. The catalysed reaction is tRNA(His) + L-histidine + ATP = L-histidyl-tRNA(His) + AMP + diphosphate + H(+). This Rickettsia bellii (strain RML369-C) protein is Histidine--tRNA ligase.